The primary structure comprises 597 residues: Elongation factor 4 (597 aa).

Positions 2–184 (QNIRNFSIIA…DIVKKIPAPE (183 aa)) constitute a tr-type G domain. GTP is bound by residues 14–19 (DHGKST) and 131–134 (NKID).

Belongs to the TRAFAC class translation factor GTPase superfamily. Classic translation factor GTPase family. LepA subfamily.

The protein resides in the cell inner membrane. The catalysed reaction is GTP + H2O = GDP + phosphate + H(+). Its function is as follows. Required for accurate and efficient protein synthesis under certain stress conditions. May act as a fidelity factor of the translation reaction, by catalyzing a one-codon backward translocation of tRNAs on improperly translocated ribosomes. Back-translocation proceeds from a post-translocation (POST) complex to a pre-translocation (PRE) complex, thus giving elongation factor G a second chance to translocate the tRNAs correctly. Binds to ribosomes in a GTP-dependent manner. The protein is Elongation factor 4 of Haemophilus ducreyi (strain 35000HP / ATCC 700724).